Here is a 958-residue protein sequence, read N- to C-terminus: Glycine dehydrogenase (decarboxylating) (958 aa).

N6-(pyridoxal phosphate)lysine is present on lysine 708.

It belongs to the GcvP family. In terms of assembly, the glycine cleavage system is composed of four proteins: P, T, L and H. Pyridoxal 5'-phosphate is required as a cofactor.

The catalysed reaction is N(6)-[(R)-lipoyl]-L-lysyl-[glycine-cleavage complex H protein] + glycine + H(+) = N(6)-[(R)-S(8)-aminomethyldihydrolipoyl]-L-lysyl-[glycine-cleavage complex H protein] + CO2. In terms of biological role, the glycine cleavage system catalyzes the degradation of glycine. The P protein binds the alpha-amino group of glycine through its pyridoxal phosphate cofactor; CO(2) is released and the remaining methylamine moiety is then transferred to the lipoamide cofactor of the H protein. The polypeptide is Glycine dehydrogenase (decarboxylating) (Photorhabdus laumondii subsp. laumondii (strain DSM 15139 / CIP 105565 / TT01) (Photorhabdus luminescens subsp. laumondii)).